Here is a 280-residue protein sequence, read N- to C-terminus: 2-dehydro-3-deoxyphosphooctonate aldolase (280 aa).

It belongs to the KdsA family.

The protein resides in the cytoplasm. The catalysed reaction is D-arabinose 5-phosphate + phosphoenolpyruvate + H2O = 3-deoxy-alpha-D-manno-2-octulosonate-8-phosphate + phosphate. It participates in carbohydrate biosynthesis; 3-deoxy-D-manno-octulosonate biosynthesis; 3-deoxy-D-manno-octulosonate from D-ribulose 5-phosphate: step 2/3. Its pathway is bacterial outer membrane biogenesis; lipopolysaccharide biosynthesis. In Neisseria meningitidis serogroup B (strain ATCC BAA-335 / MC58), this protein is 2-dehydro-3-deoxyphosphooctonate aldolase.